A 219-amino-acid chain; its full sequence is Tegument protein UL14 (219 aa).

A disordered region spans residues 161 to 219 (ANGPSRIGSHPTYTPTPTGPPGAPAAPLSRTPPSPAPPTGPATDPASASGFARDYPDGE). Over residues 177-200 (PTGPPGAPAAPLSRTPPSPAPPTG) the composition is skewed to pro residues.

Belongs to the alphaherpesvirinae HHV-1 UL14 protein family. Interacts with UL51. In terms of processing, phosphorylated.

Its subcellular location is the virion tegument. It localises to the host cytoplasm. The protein localises to the host nucleus. Functionally, contributes to the nuclear transport of the viral transcriptional activator VP16 during the early phase of infection. Therefore, participates indirectly in the regulation of the immediate-early gene expression. Additionally, seems to be important for efficient nuclear targeting of capsids. The UL51-UL14 complex regulates final viral envelopment for efficient viral replication. In Human herpesvirus 1 (strain 17) (HHV-1), this protein is Tegument protein UL14.